An 892-amino-acid chain; its full sequence is Alanine--tRNA ligase (892 aa).

Residues H577, H581, C680, and H684 each contribute to the Zn(2+) site.

This sequence belongs to the class-II aminoacyl-tRNA synthetase family. The cofactor is Zn(2+).

The protein resides in the cytoplasm. The enzyme catalyses tRNA(Ala) + L-alanine + ATP = L-alanyl-tRNA(Ala) + AMP + diphosphate. Catalyzes the attachment of alanine to tRNA(Ala) in a two-step reaction: alanine is first activated by ATP to form Ala-AMP and then transferred to the acceptor end of tRNA(Ala). Also edits incorrectly charged Ser-tRNA(Ala) and Gly-tRNA(Ala) via its editing domain. The sequence is that of Alanine--tRNA ligase from Arthrobacter sp. (strain FB24).